A 104-amino-acid chain; its full sequence is Large ribosomal subunit protein bL28 (104 aa).

Belongs to the bacterial ribosomal protein bL28 family.

The chain is Large ribosomal subunit protein bL28 from Wolbachia pipientis wMel.